A 1291-amino-acid polypeptide reads, in one-letter code: DNA-directed RNA polymerase subunit beta' (1291 aa).

Zn(2+) contacts are provided by Cys-60, Cys-62, Cys-75, and Cys-78. 3 residues coordinate Mg(2+): Asp-535, Asp-537, and Asp-539. Zn(2+) contacts are provided by Cys-878, Cys-954, Cys-961, and Cys-964.

This sequence belongs to the RNA polymerase beta' chain family. In terms of assembly, the RNAP catalytic core consists of 2 alpha, 1 beta, 1 beta' and 1 omega subunit. When a sigma factor is associated with the core the holoenzyme is formed, which can initiate transcription. It depends on Mg(2+) as a cofactor. Zn(2+) serves as cofactor.

The catalysed reaction is RNA(n) + a ribonucleoside 5'-triphosphate = RNA(n+1) + diphosphate. In terms of biological role, DNA-dependent RNA polymerase catalyzes the transcription of DNA into RNA using the four ribonucleoside triphosphates as substrates. The protein is DNA-directed RNA polymerase subunit beta' of Thermobifida fusca (strain YX).